A 225-amino-acid polypeptide reads, in one-letter code: Probable polyketide biosynthesis zinc-dependent hydrolase PksB (225 aa).

Zn(2+) contacts are provided by His-62, His-64, Asp-66, His-67, His-123, Asp-140, and His-181.

Belongs to the metallo-beta-lactamase superfamily. Zn(2+) serves as cofactor.

The protein localises to the cytoplasm. Its pathway is antibiotic biosynthesis; bacillaene biosynthesis. In terms of biological role, probably involved in some intermediate steps for the synthesis of the antibiotic polyketide bacillaene which is involved in secondary metabolism. The chain is Probable polyketide biosynthesis zinc-dependent hydrolase PksB (pksB) from Bacillus subtilis (strain 168).